The primary structure comprises 297 residues: Band 7 protein AAEL010189 (297 aa).

A compositionally biased stretch (polar residues) spans 1 to 13 (MGVVESITNSTKP). The segment at 1-30 (MGVVESITNSTKPGVTKKSSPEAEDDSNGE) is disordered. The helical transmembrane segment at 37–57 (ILIFLSWVLVVLTMPFSLLVC) threads the bilayer.

The protein belongs to the band 7/mec-2 family.

It is found in the membrane. The protein is Band 7 protein AAEL010189 of Aedes aegypti (Yellowfever mosquito).